A 346-amino-acid polypeptide reads, in one-letter code: Uroporphyrinogen decarboxylase (346 aa).

Substrate contacts are provided by residues 26 to 30, Asp76, Tyr153, Ser208, and His323; that span reads RQAGR.

It belongs to the uroporphyrinogen decarboxylase family. Homodimer.

The protein localises to the cytoplasm. The catalysed reaction is uroporphyrinogen III + 4 H(+) = coproporphyrinogen III + 4 CO2. It participates in porphyrin-containing compound metabolism; protoporphyrin-IX biosynthesis; coproporphyrinogen-III from 5-aminolevulinate: step 4/4. In terms of biological role, catalyzes the decarboxylation of four acetate groups of uroporphyrinogen-III to yield coproporphyrinogen-III. This is Uroporphyrinogen decarboxylase from Prochlorococcus marinus (strain MIT 9515).